The sequence spans 305 residues: UDP-3-O-acyl-N-acetylglucosamine deacetylase (305 aa).

Zn(2+)-binding residues include histidine 79, histidine 238, and aspartate 242. The active-site Proton donor is the histidine 265.

This sequence belongs to the LpxC family. It depends on Zn(2+) as a cofactor.

The enzyme catalyses a UDP-3-O-[(3R)-3-hydroxyacyl]-N-acetyl-alpha-D-glucosamine + H2O = a UDP-3-O-[(3R)-3-hydroxyacyl]-alpha-D-glucosamine + acetate. The protein operates within glycolipid biosynthesis; lipid IV(A) biosynthesis; lipid IV(A) from (3R)-3-hydroxytetradecanoyl-[acyl-carrier-protein] and UDP-N-acetyl-alpha-D-glucosamine: step 2/6. In terms of biological role, catalyzes the hydrolysis of UDP-3-O-myristoyl-N-acetylglucosamine to form UDP-3-O-myristoylglucosamine and acetate, the committed step in lipid A biosynthesis. The polypeptide is UDP-3-O-acyl-N-acetylglucosamine deacetylase (Pectobacterium atrosepticum (strain SCRI 1043 / ATCC BAA-672) (Erwinia carotovora subsp. atroseptica)).